The following is an 85-amino-acid chain: UPF0335 protein Atu3758 (85 aa).

This sequence belongs to the UPF0335 family.

The sequence is that of UPF0335 protein Atu3758 from Agrobacterium fabrum (strain C58 / ATCC 33970) (Agrobacterium tumefaciens (strain C58)).